A 254-amino-acid chain; its full sequence is Leucyl/phenylalanyl-tRNA--protein transferase (254 aa).

The protein belongs to the L/F-transferase family.

It is found in the cytoplasm. The enzyme catalyses N-terminal L-lysyl-[protein] + L-leucyl-tRNA(Leu) = N-terminal L-leucyl-L-lysyl-[protein] + tRNA(Leu) + H(+). The catalysed reaction is N-terminal L-arginyl-[protein] + L-leucyl-tRNA(Leu) = N-terminal L-leucyl-L-arginyl-[protein] + tRNA(Leu) + H(+). It carries out the reaction L-phenylalanyl-tRNA(Phe) + an N-terminal L-alpha-aminoacyl-[protein] = an N-terminal L-phenylalanyl-L-alpha-aminoacyl-[protein] + tRNA(Phe). Functionally, functions in the N-end rule pathway of protein degradation where it conjugates Leu, Phe and, less efficiently, Met from aminoacyl-tRNAs to the N-termini of proteins containing an N-terminal arginine or lysine. The chain is Leucyl/phenylalanyl-tRNA--protein transferase from Burkholderia lata (strain ATCC 17760 / DSM 23089 / LMG 22485 / NCIMB 9086 / R18194 / 383).